A 246-amino-acid polypeptide reads, in one-letter code: Octanoyltransferase (246 aa).

The 187-residue stretch at 54–240 folds into the BPL/LPL catalytic domain; it reads DPPPEAVWLL…CLEPNADAAI (187 aa). Residues 96–103, 163–165, and 176–178 each bind substrate; these read RGGEVTHH, AIG, and GVA. C194 serves as the catalytic Acyl-thioester intermediate.

This sequence belongs to the LipB family.

Its subcellular location is the cytoplasm. The catalysed reaction is octanoyl-[ACP] + L-lysyl-[protein] = N(6)-octanoyl-L-lysyl-[protein] + holo-[ACP] + H(+). The protein operates within protein modification; protein lipoylation via endogenous pathway; protein N(6)-(lipoyl)lysine from octanoyl-[acyl-carrier-protein]: step 1/2. In terms of biological role, catalyzes the transfer of endogenously produced octanoic acid from octanoyl-acyl-carrier-protein onto the lipoyl domains of lipoate-dependent enzymes. Lipoyl-ACP can also act as a substrate although octanoyl-ACP is likely to be the physiological substrate. This Synechococcus sp. (strain WH7803) protein is Octanoyltransferase.